A 629-amino-acid polypeptide reads, in one-letter code: Protein SPT2 homolog (629 aa).

The important for interaction with DNA stretch occupies residues methionine 1–serine 522. The stretch at glutamine 45–lysine 72 forms a coiled coil. The span at valine 53–phenylalanine 93 shows a compositional bias: basic and acidic residues. 3 disordered regions span residues valine 53–serine 181, lysine 206–tyrosine 533, and glutamate 608–lysine 629. The span at lysine 111–lysine 123 shows a compositional bias: polar residues. Over residues glycine 127 to serine 144 the composition is skewed to acidic residues. Positions valine 203–lysine 228 form a coiled coil. Composition is skewed to basic and acidic residues over residues lysine 206–arginine 247 and lysine 257–glutamine 277. 7 stretches are compositionally biased toward polar residues: residues serine 278–serine 297, serine 305–alanine 327, serine 335–aspartate 345, valine 353–glycine 364, serine 387–proline 398, asparagine 437–serine 450, and serine 462–isoleucine 490. The tract at residues glycine 523–lysine 629 is important for interaction with histones. Residues tryptophan 591–lysine 629 adopt a coiled-coil conformation.

This sequence belongs to the SPT2 family. In terms of assembly, interacts with histones. Interacts with a heterotetrameric complex formed by histone H3 and H4, especially when the histone tetramer is not bound to DNA.

It localises to the nucleus. It is found in the nucleolus. Its function is as follows. Histone chaperone that stabilizes pre-existing histone tetramers and regulates replication-independent histone exchange on chromatin. Required for normal chromatin refolding in the coding region of transcribed genes, and for the suppression of spurious transcription. Binds DNA and histones and promotes nucleosome assembly (in vitro). Facilitates formation of tetrameric histone complexes containing histone H3 and H4. Modulates RNA polymerase 1-mediated transcription. Binds DNA, with a preference for branched DNA species, such as Y-form DNA and Holliday junction DNA. The sequence is that of Protein SPT2 homolog (spty2d1) from Danio rerio (Zebrafish).